The chain runs to 353 residues: MTLERTGRDEEKALTQPPSGHSSVQAGKVGVLLVNLGTPDGTDYWPMRRYLGEFLSDRRVIEWPRAVWYPILYGIILARRPKKSGALYAKIWNREQNESPLRTFTRAQGQKLATALADKENVIVDWAMRYGSPSIETVTKSLIERGCDRIVMFPLYPQYSATTTATVNDKFFEALIEMRHQPAVRTVPAYPEEPVYIDALVRSIERHLATLDFEPEVVVASYHGIPQSYARRGDPYYEQCLATTARVRERLGWDEKKLITTFQSRFGPEEWLQPYTDKTVEQLARDGVRSIAVINPGFVSDCLETLEEIAVEADRTFREAGGKNFTHIPCLNDSDEGMAVIESLIRREMSGWA.

Positions 1-13 (MTLERTGRDEEKA) are enriched in basic and acidic residues. The interval 1-23 (MTLERTGRDEEKALTQPPSGHSS) is disordered. Positions 223 and 304 each coordinate Fe cation.

It belongs to the ferrochelatase family.

The protein resides in the cytoplasm. The catalysed reaction is heme b + 2 H(+) = protoporphyrin IX + Fe(2+). It participates in porphyrin-containing compound metabolism; protoheme biosynthesis; protoheme from protoporphyrin-IX: step 1/1. Catalyzes the ferrous insertion into protoporphyrin IX. The polypeptide is Ferrochelatase (Chelativorans sp. (strain BNC1)).